A 462-amino-acid chain; its full sequence is Zinc finger CCCH domain-containing protein 8 (462 aa).

6 consecutive C3H1-type zinc fingers follow at residues 105-133, 156-184, 209-237, 288-316, 367-395, and 422-450; these read RPGE…HPQW, QEGE…HPKE, RPSE…HPKD, RPGE…HPDR, RPGA…HPID, and REDA…HPPP.

This is Zinc finger CCCH domain-containing protein 8 from Oryza sativa subsp. japonica (Rice).